The primary structure comprises 79 residues: Cytochrome c oxidase subunit 7A1, mitochondrial (79 aa).

The transit peptide at 1 to 21 (MQALRVSRALIRSFNTTARNR) directs the protein to the mitochondrion. The Mitochondrial matrix segment spans residues 22–46 (FQNRVPEKQKLFQEDNDIPLYLKGG). Residues 47-75 (IVDNILYRVTMGLCLGGSAYSMYCLGWAS) form a helical membrane-spanning segment. The Mitochondrial intermembrane segment spans residues 76–79 (FPRN).

It belongs to the cytochrome c oxidase VIIa family. As to quaternary structure, component of the complex IV (CIV, cytochrome c oxidase), a multisubunit enzyme composed of 14 subunits. The complex is composed of a catalytic core of 3 subunits MT-CO1, MT-CO2 and MT-CO3, encoded in the mitochondrial DNA, and 11 supernumerary subunits COX4I1 (or COX4I2), COX5A, COX5B, COX6A2 (or COX6A1), COX6B1 (or COX6B2), COX6C, COX7A1 (or COX7A2), COX7B, COX7C, COX8B and NDUFA4, which are encoded in the nuclear genome. The complex exists as a monomer or a dimer and forms supercomplexes (SCs) in the inner mitochondrial membrane with NADH-ubiquinone oxidoreductase (complex I, CI) and ubiquinol-cytochrome c oxidoreductase (cytochrome b-c1 complex, complex III, CIII), resulting in different assemblies (supercomplex SCI(1)III(2)IV(1) and megacomplex MCI(2)III(2)IV(2)).

The protein localises to the mitochondrion inner membrane. It functions in the pathway energy metabolism; oxidative phosphorylation. In terms of biological role, component of the mitochondrial respiratory complex IV (CIV, also named cytochrome c oxidase complex), the last enzyme in the mitochondrial electron transport chain which drives oxidative phosphorylation. The CIV complex is the component of the respiratory chain that catalyzes the reduction of oxygen to water. Acts as an assembly factor that specifically drives the homodimerization of CIV complexes, mediating the formation of mitochondrial respiratory supercomplexes (respirasomes) containing two CIV: supercomplxes with two molecules of CIV show improved activity. Despite being highly expressed in brown adipose tissue, not required for thermogenesis. The sequence is that of Cytochrome c oxidase subunit 7A1, mitochondrial (COX7A1) from Trachypithecus cristatus (Silvered leaf-monkey).